Consider the following 78-residue polypeptide: Large ribosomal subunit protein bL28 (78 aa).

Residues 1 to 20 are disordered; sequence MSQVCQVTGKRPVVGNNRSH.

It belongs to the bacterial ribosomal protein bL28 family.

The chain is Large ribosomal subunit protein bL28 from Idiomarina loihiensis (strain ATCC BAA-735 / DSM 15497 / L2-TR).